Consider the following 143-residue polypeptide: Transcriptional regulator MraZ (143 aa).

2 consecutive SpoVT-AbrB domains span residues Glu-5–Glu-47 and Ala-76–Arg-119.

It belongs to the MraZ family. In terms of assembly, forms oligomers.

It is found in the cytoplasm. The protein resides in the nucleoid. This Ligilactobacillus salivarius (strain UCC118) (Lactobacillus salivarius) protein is Transcriptional regulator MraZ.